Here is a 200-residue protein sequence, read N- to C-terminus: Recombination protein RecR (200 aa).

The C4-type zinc finger occupies 60 to 75 (CVYCQALTEDDVCNIC). Positions 83–177 (TKLCIIESML…KISRIGFGVP (95 aa)) constitute a Toprim domain.

Belongs to the RecR family.

May play a role in DNA repair. It seems to be involved in an RecBC-independent recombinational process of DNA repair. It may act with RecF and RecO. This Francisella tularensis subsp. tularensis (strain WY96-3418) protein is Recombination protein RecR.